Reading from the N-terminus, the 370-residue chain is NSFL1 cofactor p47 (370 aa).

The interval 54–73 is disordered; that stretch reads SQATPSSVSRGTAPSDNRVT. Residues S74, S102, and S114 each carry the phosphoserine modification. Disordered stretches follow at residues 80-116 and 137-157; these read HDQD…RSPN and VTKS…GYRL. A Nuclear localization signal motif is present at residues 109–115; that stretch reads PPRKRSP. The residue at position 140 (S140) is a Phosphoserine; by CDK1. At Y167 the chain carries Phosphotyrosine. The Nuclear localization signal signature appears at 172-175; it reads RRRH. Residues S176, S192, and S272 each carry the phosphoserine modification. The region spanning 179 to 244 is the SEP domain; the sequence is DVHVVLKLWK…MEDHRDEDFV (66 aa). Residues 272–292 are disordered; it reads SPAQQAENEAKASSSISIDES. The UBX domain maps to 291–368; it reads ESQPTTNIQI…NLLNAVIVQR (78 aa).

In terms of assembly, part of a ternary complex containing STX5A, NSFL1C and VCP. NSFL1C forms a homotrimer that binds to one end of a VCP homohexamer. The complex binds to membranes enriched in phosphatidylethanolamine-containing lipids and promotes Golgi membrane fusion. Interaction with VCIP135 leads to dissociation of the complex via ATP hydrolysis by VCP. Binds ubiquitin and mono-ubiquitinated proteins via its N-terminal UBA-like domain when bound to VCP. Post-translationally, phosphorylated during mitosis. Phosphorylation inhibits interaction with Golgi membranes and is required for the fragmentation of the Golgi stacks during mitosis.

Its subcellular location is the nucleus. The protein resides in the golgi apparatus. It localises to the golgi stack. It is found in the chromosome. The protein localises to the cytoplasm. Its subcellular location is the cytoskeleton. The protein resides in the microtubule organizing center. It localises to the centrosome. Its function is as follows. Reduces the ATPase activity of VCP. Necessary for the fragmentation of Golgi stacks during mitosis and for VCP-mediated reassembly of Golgi stacks after mitosis. May play a role in VCP-mediated formation of transitional endoplasmic reticulum (tER). Inhibits the activity of CTSL (in vitro). Together with UBXN2B/p37, regulates the centrosomal levels of kinase AURKA/Aurora A during mitotic progression by promoting AURKA removal from centrosomes in prophase. Also, regulates spindle orientation during mitosis. The polypeptide is NSFL1 cofactor p47 (NSFL1C) (Bos taurus (Bovine)).